Consider the following 874-residue polypeptide: Chaperone protein ClpB 1 (874 aa).

One can recognise a Clp R domain in the interval 6-148 (PNQFTEKAWE…RQIIQQIRGS (143 aa)). Repeat regions lie at residues 9–73 (FTEK…IARQ) and 85–148 (LGRS…IRGS). Residues 161-342 (EALEKYGRDL…RRFQQVFVDQ (182 aa)) are NBD1. 208–215 (GEPGVGKT) contributes to the ATP binding site. The interval 343–551 (PTVEDTISIL…IAEIISKWTG (209 aa)) is linker. A coiled-coil region spans residues 393 to 527 (IDLVDESAAR…MEGGLATTHT (135 aa)). The segment at 561 to 772 (EMQKLLNLDE…RVDETIIFHS (212 aa)) is NBD2. 611-618 (GPTGVGKT) is a binding site for ATP. Residues 773–874 (LRKDQLQQIV…IATPTAVPLS (102 aa)) are C-terminal.

The protein belongs to the ClpA/ClpB family. Homohexamer. The oligomerization is ATP-dependent.

Its subcellular location is the cytoplasm. In terms of biological role, part of a stress-induced multi-chaperone system, it is involved in the recovery of the cell from heat-induced damage, in cooperation with DnaK, DnaJ and GrpE. Acts before DnaK, in the processing of protein aggregates. Protein binding stimulates the ATPase activity; ATP hydrolysis unfolds the denatured protein aggregates, which probably helps expose new hydrophobic binding sites on the surface of ClpB-bound aggregates, contributing to the solubilization and refolding of denatured protein aggregates by DnaK. Necessary for thermotolerance. This Synechococcus elongatus (strain ATCC 33912 / PCC 7942 / FACHB-805) (Anacystis nidulans R2) protein is Chaperone protein ClpB 1 (clpB1).